The following is a 284-amino-acid chain: Pantothenate synthetase (284 aa).

Residue 31 to 38 (MGNLHAGH) participates in ATP binding. The active-site Proton donor is H38. Q62 is a binding site for (R)-pantoate. Residue Q62 coordinates beta-alanine. An ATP-binding site is contributed by 150-153 (GKKD). Q156 is a (R)-pantoate binding site. ATP is bound by residues V179 and 187–190 (MSSR).

This sequence belongs to the pantothenate synthetase family. In terms of assembly, homodimer.

It is found in the cytoplasm. The enzyme catalyses (R)-pantoate + beta-alanine + ATP = (R)-pantothenate + AMP + diphosphate + H(+). It participates in cofactor biosynthesis; (R)-pantothenate biosynthesis; (R)-pantothenate from (R)-pantoate and beta-alanine: step 1/1. Catalyzes the condensation of pantoate with beta-alanine in an ATP-dependent reaction via a pantoyl-adenylate intermediate. This chain is Pantothenate synthetase, found in Xanthomonas campestris pv. campestris (strain 8004).